Consider the following 111-residue polypeptide: MTLADLKKPTSRATPSTEETFTRVRTPRRENNEILATVESLLGANRLRLRCMDGVVRMGRIPGSMKKKTWIREGDVVIVVPWEFQNEKADVIWKYTRPQVDWLERKGYLKG.

The segment at 1–26 is disordered; sequence MTLADLKKPTSRATPSTEETFTRVRT. The 75-residue stretch at 22–96 folds into the S1-like domain; sequence TRVRTPRREN…EKADVIWKYT (75 aa).

Belongs to the eIF-1A family.

Seems to be required for maximal rate of protein biosynthesis. Enhances ribosome dissociation into subunits and stabilizes the binding of the initiator Met-tRNA(I) to 40 S ribosomal subunits. In Methanosarcina acetivorans (strain ATCC 35395 / DSM 2834 / JCM 12185 / C2A), this protein is Translation initiation factor 1A 1 (eIF1A1).